A 479-amino-acid chain; its full sequence is Phosphoglycerate kinase, glycosomal (479 aa).

Residues Val-23, Asp-24, Phe-25, Asn-26, Arg-39, Ser-61, His-62, Gly-64, Arg-65, Arg-132, His-168, and Arg-169 each coordinate (2R)-3-phosphoglycerate. Residues Gly-214 and Ala-215 each coordinate ADP. Gly-214 contacts CDP. The AMP site is built by Ala-215 and Lys-216. Ala-215 provides a ligand contact to ATP. Residue Ala-215 coordinates Mg(2+). Lys-216 lines the (2R)-3-phosphoglycerate pocket. Asp-219 is a CDP binding site. Residue Asp-219 coordinates Mg(2+). Lys-220 and Gly-238 together coordinate ADP. Lys-220 lines the AMP pocket. Residue Lys-220 participates in ATP binding. Gly-238 contributes to the CDP binding site. AMP-binding residues include Ala-239 and Ala-311. 2 residues coordinate ATP: Ala-239 and Ala-311. The ADP site is built by Ala-311 and Asn-335. CDP is bound by residues Gly-336 and Phe-341. 4 residues coordinate ADP: Phe-341, Glu-342, Asp-374, and Ser-375. Glu-342 contacts AMP. Positions 342, 374, and 375 each coordinate ATP. Mg(2+) is bound at residue Asp-374.

The protein belongs to the phosphoglycerate kinase family. In terms of assembly, monomer. Mg(2+) serves as cofactor.

It is found in the glycosome. The enzyme catalyses (2R)-3-phosphoglycerate + ATP = (2R)-3-phospho-glyceroyl phosphate + ADP. It functions in the pathway carbohydrate degradation; glycolysis; pyruvate from D-glyceraldehyde 3-phosphate: step 2/5. This is Phosphoglycerate kinase, glycosomal (PGKC) from Leishmania major.